Here is a 752-residue protein sequence, read N- to C-terminus: Photosystem I P700 chlorophyll a apoprotein A1 (752 aa).

A run of 8 helical transmembrane segments spans residues 73–96, 159–182, 198–222, 294–312, 349–372, 388–414, 436–458, and 533–551; these read IFAA…FHGA, LYCT…FHYH, LNHH…HVSA, IAHH…GHQY, WHAQ…HHMY, LCIF…IFMV, AIIS…LYIH, and FLIH…LILL. Residues C575 and C584 each coordinate [4Fe-4S] cluster. Transmembrane regions (helical) follow at residues 591–612 and 666–688; these read HVFL…HFSW and LSAY…MFLF. H677 provides a ligand contact to chlorophyll a'. Positions 685 and 693 each coordinate chlorophyll a. Residue W694 participates in phylloquinone binding. A helical membrane pass occupies residues 726-746; it reads AVGVAHYLLGGIATTWAFFHA.

It belongs to the PsaA/PsaB family. The PsaA/B heterodimer binds the P700 chlorophyll special pair and subsequent electron acceptors. PSI consists of a core antenna complex that captures photons, and an electron transfer chain that converts photonic excitation into a charge separation. The cyanobacterial PSI reaction center is composed of one copy each of PsaA,B,C,D,E,F,I,J,K,L,M and X, and forms trimeric complexes. It depends on PSI electron transfer chain: 5 chlorophyll a, 1 chlorophyll a', 2 phylloquinones and 3 4Fe-4S clusters. PSI core antenna: 90 chlorophyll a, 22 carotenoids, 3 phospholipids and 1 galactolipid. P700 is a chlorophyll a/chlorophyll a' dimer, A0 is one or more chlorophyll a, A1 is one or both phylloquinones and FX is a shared 4Fe-4S iron-sulfur center. as a cofactor.

It is found in the cellular thylakoid membrane. The enzyme catalyses reduced [plastocyanin] + hnu + oxidized [2Fe-2S]-[ferredoxin] = oxidized [plastocyanin] + reduced [2Fe-2S]-[ferredoxin]. In terms of biological role, psaA and PsaB bind P700, the primary electron donor of photosystem I (PSI), as well as the electron acceptors A0, A1 and FX. PSI is a plastocyanin/cytochrome c6-ferredoxin oxidoreductase, converting photonic excitation into a charge separation, which transfers an electron from the donor P700 chlorophyll pair to the spectroscopically characterized acceptors A0, A1, FX, FA and FB in turn. Oxidized P700 is reduced on the lumenal side of the thylakoid membrane by plastocyanin or cytochrome c6. The chain is Photosystem I P700 chlorophyll a apoprotein A1 from Nostoc sp. (strain PCC 7120 / SAG 25.82 / UTEX 2576).